The chain runs to 215 residues: Imidazole glycerol phosphate synthase subunit HisH (215 aa).

The Glutamine amidotransferase type-1 domain maps to 8–215 (KVVVFDYGFG…QLLNNWIGTL (208 aa)). The active-site Nucleophile is Cys86. Active-site residues include His196 and Glu198.

In terms of assembly, heterodimer of HisH and HisF.

The protein resides in the cytoplasm. The catalysed reaction is 5-[(5-phospho-1-deoxy-D-ribulos-1-ylimino)methylamino]-1-(5-phospho-beta-D-ribosyl)imidazole-4-carboxamide + L-glutamine = D-erythro-1-(imidazol-4-yl)glycerol 3-phosphate + 5-amino-1-(5-phospho-beta-D-ribosyl)imidazole-4-carboxamide + L-glutamate + H(+). It carries out the reaction L-glutamine + H2O = L-glutamate + NH4(+). Its pathway is amino-acid biosynthesis; L-histidine biosynthesis; L-histidine from 5-phospho-alpha-D-ribose 1-diphosphate: step 5/9. Its function is as follows. IGPS catalyzes the conversion of PRFAR and glutamine to IGP, AICAR and glutamate. The HisH subunit catalyzes the hydrolysis of glutamine to glutamate and ammonia as part of the synthesis of IGP and AICAR. The resulting ammonia molecule is channeled to the active site of HisF. The sequence is that of Imidazole glycerol phosphate synthase subunit HisH from Streptomyces avermitilis (strain ATCC 31267 / DSM 46492 / JCM 5070 / NBRC 14893 / NCIMB 12804 / NRRL 8165 / MA-4680).